Here is a 322-residue protein sequence, read N- to C-terminus: Ferredoxin--NADP reductase (322 aa).

Residues E37, Q45, Y50, I91, F128, and D290 each coordinate FAD.

Belongs to the ferredoxin--NADP reductase type 2 family. Homodimer. The cofactor is FAD.

The catalysed reaction is 2 reduced [2Fe-2S]-[ferredoxin] + NADP(+) + H(+) = 2 oxidized [2Fe-2S]-[ferredoxin] + NADPH. The sequence is that of Ferredoxin--NADP reductase from Malacoplasma penetrans (strain HF-2) (Mycoplasma penetrans).